A 189-amino-acid chain; its full sequence is Elongation factor P (189 aa).

Belongs to the elongation factor P family.

It is found in the cytoplasm. Its pathway is protein biosynthesis; polypeptide chain elongation. Functionally, involved in peptide bond synthesis. Stimulates efficient translation and peptide-bond synthesis on native or reconstituted 70S ribosomes in vitro. Probably functions indirectly by altering the affinity of the ribosome for aminoacyl-tRNA, thus increasing their reactivity as acceptors for peptidyl transferase. The protein is Elongation factor P of Rhizobium leguminosarum bv. trifolii (strain WSM2304).